We begin with the raw amino-acid sequence, 35 residues long: GIKEMLCNMACAQTVCKKSGGPLCDTCQAACKALG.

A methionine sulfoxide mark is found at Met5 and Met9. 3 disulfides stabilise this stretch: Cys7–Cys31, Cys11–Cys27, and Cys16–Cys24. At Gly35 the chain carries Glycine amide.

Oxidation likely reduces antimicrobial activity against Gram-positive bacteria and Gram-negative bacteria.

It is found in the secreted. In terms of biological role, has antimicrobial activity against Gram-positive bacteria (C.glutamicum ATCC 13032 (MIC=1.6 uM) and B.subtilis ATCC 23857 (MIC=1.6 uM)) and Gram-negative bacteria (E.coli ATCC 25922 (MIC=12.5 uM) and P.aeruginosa ATCC 27853 (MIC=25.0 uM)). Displays very low activity against the Gram-positive bacteria S.aureus ATCC 9144 (MIC&gt;100 uM). The polypeptide is Turgencin-B (Synoicum turgens (Colonial ascidian)).